The sequence spans 97 residues: MNLNDVIKGPLITEKLDKAREKFRQYSFIVDRKATKHDVARAVETLFKVTVEGVNTNIVRGKIKRVGRSIGKRPNFKKAVVTLKQGDSIELFEGGAA.

The protein belongs to the universal ribosomal protein uL23 family. In terms of assembly, part of the 50S ribosomal subunit. Contacts protein L29, and trigger factor when it is bound to the ribosome.

In terms of biological role, one of the early assembly proteins it binds 23S rRNA. One of the proteins that surrounds the polypeptide exit tunnel on the outside of the ribosome. Forms the main docking site for trigger factor binding to the ribosome. The protein is Large ribosomal subunit protein uL23 of Myxococcus xanthus (strain DK1622).